The following is a 393-amino-acid chain: Formate-dependent phosphoribosylglycinamide formyltransferase (393 aa).

Residues 22–23 (EL) and E82 contribute to the N(1)-(5-phospho-beta-D-ribosyl)glycinamide site. ATP is bound by residues R114, K155, 160-165 (SSGKGQ), 195-198 (EGFI), and E203. In terms of domain architecture, ATP-grasp spans 119–308 (RLAAEELDLP…QFALHARAIL (190 aa)). 2 residues coordinate Mg(2+): E267 and E279. N(1)-(5-phospho-beta-D-ribosyl)glycinamide-binding positions include D286, K356, and 363 to 364 (RR).

It belongs to the PurK/PurT family. In terms of assembly, homodimer.

The enzyme catalyses N(1)-(5-phospho-beta-D-ribosyl)glycinamide + formate + ATP = N(2)-formyl-N(1)-(5-phospho-beta-D-ribosyl)glycinamide + ADP + phosphate + H(+). Its pathway is purine metabolism; IMP biosynthesis via de novo pathway; N(2)-formyl-N(1)-(5-phospho-D-ribosyl)glycinamide from N(1)-(5-phospho-D-ribosyl)glycinamide (formate route): step 1/1. Functionally, involved in the de novo purine biosynthesis. Catalyzes the transfer of formate to 5-phospho-ribosyl-glycinamide (GAR), producing 5-phospho-ribosyl-N-formylglycinamide (FGAR). Formate is provided by PurU via hydrolysis of 10-formyl-tetrahydrofolate. The chain is Formate-dependent phosphoribosylglycinamide formyltransferase from Pseudomonas fluorescens (strain ATCC BAA-477 / NRRL B-23932 / Pf-5).